A 149-amino-acid polypeptide reads, in one-letter code: MRIVIQKVSQAMVKVDNEIVSQIAKGYMLLVGISTEDTIADAQKLSNKVLNLRLFETGDQFWKHSIQDVQGEILSVSQFTLMARTKKGNKPDFHKAQKGEHAQELYNQFLDLLKTTLGADKVKDGQFGAMMSCSLTNEGPVTIILDSTE.

The Gly-cisPro motif, important for rejection of L-amino acids signature appears at 139-140; the sequence is GP.

It belongs to the DTD family. In terms of assembly, homodimer.

The protein resides in the cytoplasm. The enzyme catalyses glycyl-tRNA(Ala) + H2O = tRNA(Ala) + glycine + H(+). It catalyses the reaction a D-aminoacyl-tRNA + H2O = a tRNA + a D-alpha-amino acid + H(+). In terms of biological role, an aminoacyl-tRNA editing enzyme that deacylates mischarged D-aminoacyl-tRNAs. Also deacylates mischarged glycyl-tRNA(Ala), protecting cells against glycine mischarging by AlaRS. Acts via tRNA-based rather than protein-based catalysis; rejects L-amino acids rather than detecting D-amino acids in the active site. By recycling D-aminoacyl-tRNA to D-amino acids and free tRNA molecules, this enzyme counteracts the toxicity associated with the formation of D-aminoacyl-tRNA entities in vivo and helps enforce protein L-homochirality. The protein is D-aminoacyl-tRNA deacylase (DTD1) of Candida glabrata (strain ATCC 2001 / BCRC 20586 / JCM 3761 / NBRC 0622 / NRRL Y-65 / CBS 138) (Yeast).